The following is a 170-amino-acid chain: Probable deoxyuridine 5'-triphosphate nucleotidohydrolase (170 aa).

This sequence belongs to the dCTP deaminase family. Archaeal dUTPase subfamily.

It carries out the reaction dUTP + H2O = dUMP + diphosphate + H(+). It functions in the pathway pyrimidine metabolism; dUMP biosynthesis; dUMP from dCTP (dUTP route): step 2/2. Its function is as follows. This enzyme is involved in nucleotide metabolism: it produces dUMP, the immediate precursor of thymidine nucleotides and it decreases the intracellular concentration of dUTP so that uracil cannot be incorporated into DNA. The polypeptide is Probable deoxyuridine 5'-triphosphate nucleotidohydrolase (Methanococcoides burtonii (strain DSM 6242 / NBRC 107633 / OCM 468 / ACE-M)).